The chain runs to 263 residues: Shikimate dehydrogenase (NADP(+)) (263 aa).

Shikimate-binding positions include 21-23 (TLS) and Thr67. The active-site Proton acceptor is Lys71. Glu83 lines the NADP(+) pocket. Asn92 and Asp103 together coordinate shikimate. NADP(+) is bound by residues 126 to 130 (GAGGA) and Leu204. Shikimate is bound at residue Tyr206. An NADP(+)-binding site is contributed by Gly227.

It belongs to the shikimate dehydrogenase family. Homodimer.

The catalysed reaction is shikimate + NADP(+) = 3-dehydroshikimate + NADPH + H(+). Its pathway is metabolic intermediate biosynthesis; chorismate biosynthesis; chorismate from D-erythrose 4-phosphate and phosphoenolpyruvate: step 4/7. In terms of biological role, involved in the biosynthesis of the chorismate, which leads to the biosynthesis of aromatic amino acids. Catalyzes the reversible NADPH linked reduction of 3-dehydroshikimate (DHSA) to yield shikimate (SA). This Sulfolobus acidocaldarius (strain ATCC 33909 / DSM 639 / JCM 8929 / NBRC 15157 / NCIMB 11770) protein is Shikimate dehydrogenase (NADP(+)).